Here is a 250-residue protein sequence, read N- to C-terminus: 5'-nucleotidase SurE (250 aa).

The a divalent metal cation site is built by Asp-9, Asp-10, Ser-40, and Asn-92.

Belongs to the SurE nucleotidase family. Requires a divalent metal cation as cofactor.

The protein localises to the cytoplasm. It carries out the reaction a ribonucleoside 5'-phosphate + H2O = a ribonucleoside + phosphate. In terms of biological role, nucleotidase that shows phosphatase activity on nucleoside 5'-monophosphates. The protein is 5'-nucleotidase SurE of Shewanella pealeana (strain ATCC 700345 / ANG-SQ1).